Reading from the N-terminus, the 334-residue chain is N,N'-diacetyllegionaminic acid synthase (334 aa).

The AFP-like domain maps to 282–334 (SLVAKKDIKKGEIFSEGNLTTKRPANGISAMRYEEFLGKIATKNYKEDELIRE).

The catalysed reaction is 2,4-diacetamido-2,4,6-trideoxy-alpha-D-mannopyranose + phosphoenolpyruvate + H2O = N,N-diacetyllegionaminate + phosphate. Functionally, involved in biosynthesis of legionaminic acid (5,7-diamino-3,5,7,9-tetradeoxy-D-glycero-D-galacto-non-2-ulosonic acid)(Leg), a sialic acid-like derivative that is incorporated into flagellin via O-linkage to Ser/Thr. Catalyzes the condensation of 2,4-diacetamido-2,4,6-trideoxymannose with phosphoenolpyruvate (PEP) to give N,N'-diacetyllegionaminic acid. This chain is N,N'-diacetyllegionaminic acid synthase (legI), found in Campylobacter jejuni subsp. jejuni serotype O:2 (strain ATCC 700819 / NCTC 11168).